The following is a 219-amino-acid chain: Redox-sensing transcriptional repressor Rex (219 aa).

The segment at residues 17-56 is a DNA-binding region (H-T-H motif); the sequence is VYLRVLDNLVKRDIEVVSSKSLSKETGFTAEQIRKDLAFF. An NAD(+)-binding site is contributed by 91–96; sequence GAGHLG.

Belongs to the transcriptional regulatory Rex family. In terms of assembly, homodimer.

The protein resides in the cytoplasm. In terms of biological role, modulates transcription in response to changes in cellular NADH/NAD(+) redox state. The protein is Redox-sensing transcriptional repressor Rex of Natranaerobius thermophilus (strain ATCC BAA-1301 / DSM 18059 / JW/NM-WN-LF).